The sequence spans 247 residues: Segregation and condensation protein A (247 aa).

This sequence belongs to the ScpA family. As to quaternary structure, component of a cohesin-like complex composed of ScpA, ScpB and the Smc homodimer, in which ScpA and ScpB bind to the head domain of Smc. The presence of the three proteins is required for the association of the complex with DNA.

The protein resides in the cytoplasm. Its function is as follows. Participates in chromosomal partition during cell division. May act via the formation of a condensin-like complex containing Smc and ScpB that pull DNA away from mid-cell into both cell halves. The chain is Segregation and condensation protein A from Bacillus anthracis (strain A0248).